The primary structure comprises 365 residues: Chorismate synthase (365 aa).

Positions 48 and 54 each coordinate NADP(+). FMN is bound by residues 125–127, 238–239, glycine 278, 293–297, and arginine 319; these read RSS, NA, and KPTSS.

It belongs to the chorismate synthase family. As to quaternary structure, homotetramer. FMNH2 serves as cofactor.

The catalysed reaction is 5-O-(1-carboxyvinyl)-3-phosphoshikimate = chorismate + phosphate. It participates in metabolic intermediate biosynthesis; chorismate biosynthesis; chorismate from D-erythrose 4-phosphate and phosphoenolpyruvate: step 7/7. Catalyzes the anti-1,4-elimination of the C-3 phosphate and the C-6 proR hydrogen from 5-enolpyruvylshikimate-3-phosphate (EPSP) to yield chorismate, which is the branch point compound that serves as the starting substrate for the three terminal pathways of aromatic amino acid biosynthesis. This reaction introduces a second double bond into the aromatic ring system. The protein is Chorismate synthase of Alteromonas mediterranea (strain DSM 17117 / CIP 110805 / LMG 28347 / Deep ecotype).